Consider the following 230-residue polypeptide: Ribonuclease 3 (230 aa).

Residues 6-135 enclose the RNase III domain; that stretch reads VSELRARYGI…FNGALFLDQG (130 aa). E48 provides a ligand contact to Mg(2+). D52 is an active-site residue. Positions 121 and 124 each coordinate Mg(2+). E124 is an active-site residue. The DRBM domain occupies 161 to 230; it reads DYKTNLQEFL…AKKALEQLKA (70 aa).

The protein belongs to the ribonuclease III family. Homodimer. It depends on Mg(2+) as a cofactor.

The protein localises to the cytoplasm. The enzyme catalyses Endonucleolytic cleavage to 5'-phosphomonoester.. Its function is as follows. Digests double-stranded RNA. Involved in the processing of primary rRNA transcript to yield the immediate precursors to the large and small rRNAs (23S and 16S). Processes some mRNAs, and tRNAs when they are encoded in the rRNA operon. Processes pre-crRNA and tracrRNA of type II CRISPR loci if present in the organism. The chain is Ribonuclease 3 from Latilactobacillus sakei subsp. sakei (strain 23K) (Lactobacillus sakei subsp. sakei).